Consider the following 518-residue polypeptide: Voltage-gated potassium channel regulatory subunit KCNG2 (518 aa).

Topologically, residues 1-214 are cytoplasmic; sequence MALLTGNADR…DMVENPHSGI (214 aa). Residues 215–236 form a helical membrane-spanning segment; that stretch reads PGKIFACISISFVAITAVSLCI. Topologically, residues 237–257 are extracellular; that stretch reads STMPDVREEEDRGECSQKCYD. Residues 258–279 form a helical membrane-spanning segment; that stretch reads IFVLETVCVAWFSFEFLLRSIQ. Residues 280-290 are Cytoplasmic-facing; it reads AENKCAFLKTP. Residues 291-311 traverse the membrane as a helical segment; it reads LNIIDILAILPFYISLIVDMA. The Extracellular segment spans residues 312–331; the sequence is STKNSSKPGGGAGNKYLERV. The helical; Voltage-sensor transmembrane segment at 332–352 threads the bilayer; that stretch reads GLVLRFLRALRILYVMRLARH. Residues 353–367 are Cytoplasmic-facing; that stretch reads SLGLQTLGLTVRRCT. A helical membrane pass occupies residues 368-389; the sequence is REFGLLLLFLCVAMALFSPLVY. Residues 390–404 lie on the Extracellular side of the membrane; it reads LAESELGAKQEFTSI. The segment at residues 405–416 is an intramembrane region (helical); the sequence is PTSYWWAVISMT. A Selectivity filter motif is present at residues 417-422; that stretch reads TVGYGD. An intramembrane segment occupies 417 to 424; sequence TVGYGDMV. Topologically, residues 425-431 are extracellular; that stretch reads PRSIPGQ. The helical transmembrane segment at 432–460 threads the bilayer; it reads VVALSSILSGILLMAFPVTSIFHTFSRSY. The Cytoplasmic portion of the chain corresponds to 461–518; that stretch reads SELKEQQQRAASRQMHQLEESTKLAGGGSSQWITAASPPDAAREDGRPELDQEAKRSC. Residues 473–518 are disordered; sequence RQMHQLEESTKLAGGGSSQWITAASPPDAAREDGRPELDQEAKRSC. Positions 501-518 are enriched in basic and acidic residues; that stretch reads AAREDGRPELDQEAKRSC.

The protein belongs to the potassium channel family. G (TC 1.A.1.2) subfamily. Kv6.2/KCNG2 sub-subfamily. As to quaternary structure, heterodimer with KCNB1.

It localises to the cell membrane. Regulatory alpha-subunit of the voltage-gated potassium (Kv) channel which, when coassembled with KCNB1, can modulate the kinetics and conductance-voltage relationship. Modulates channel activity by shifting the threshold and the half-maximal activation to more negative values. Potassium channel subunit that does not form functional channels by itself. This is Voltage-gated potassium channel regulatory subunit KCNG2 from Gallus gallus (Chicken).